The sequence spans 544 residues: NADH-quinone oxidoreductase subunit C/D (544 aa).

The tract at residues 1–138 (MLNCDMLIDS…KGQICTETED (138 aa)) is NADH dehydrogenase I subunit C. Positions 161–544 (MLLNVGPSHP…MNFIAGEFDR (384 aa)) are NADH dehydrogenase I subunit D.

This sequence in the N-terminal section; belongs to the complex I 30 kDa subunit family. In the C-terminal section; belongs to the complex I 49 kDa subunit family. NDH-1 is composed of 13 different subunits. Subunits NuoB, CD, E, F, and G constitute the peripheral sector of the complex.

It is found in the cell inner membrane. It carries out the reaction a quinone + NADH + 5 H(+)(in) = a quinol + NAD(+) + 4 H(+)(out). Its function is as follows. NDH-1 shuttles electrons from NADH, via FMN and iron-sulfur (Fe-S) centers, to quinones in the respiratory chain. The immediate electron acceptor for the enzyme in this species is believed to be ubiquinone. Couples the redox reaction to proton translocation (for every two electrons transferred, four hydrogen ions are translocated across the cytoplasmic membrane), and thus conserves the redox energy in a proton gradient. This is NADH-quinone oxidoreductase subunit C/D from Aliarcobacter butzleri (strain RM4018) (Arcobacter butzleri).